Consider the following 43-residue polypeptide: SPbeta prophage-derived uncharacterized protein YotD (43 aa).

The protein is SPbeta prophage-derived uncharacterized protein YotD (yotD) of Bacillus subtilis (strain 168).